The primary structure comprises 211 residues: 3-demethoxyubiquinol 3-hydroxylase (211 aa).

Fe cation is bound by residues E60, E90, H93, E142, E174, and H177.

This sequence belongs to the COQ7 family. Fe cation serves as cofactor.

The protein resides in the cell membrane. The catalysed reaction is a 5-methoxy-2-methyl-3-(all-trans-polyprenyl)benzene-1,4-diol + AH2 + O2 = a 3-demethylubiquinol + A + H2O. Its pathway is cofactor biosynthesis; ubiquinone biosynthesis. In terms of biological role, catalyzes the hydroxylation of 2-nonaprenyl-3-methyl-6-methoxy-1,4-benzoquinol during ubiquinone biosynthesis. This chain is 3-demethoxyubiquinol 3-hydroxylase, found in Acinetobacter baumannii (strain AB307-0294).